We begin with the raw amino-acid sequence, 179 residues long: ATP synthase subunit delta (179 aa).

Belongs to the ATPase delta chain family. In terms of assembly, F-type ATPases have 2 components, F(1) - the catalytic core - and F(0) - the membrane proton channel. F(1) has five subunits: alpha(3), beta(3), gamma(1), delta(1), epsilon(1). F(0) has three main subunits: a(1), b(2) and c(10-14). The alpha and beta chains form an alternating ring which encloses part of the gamma chain. F(1) is attached to F(0) by a central stalk formed by the gamma and epsilon chains, while a peripheral stalk is formed by the delta and b chains.

The protein localises to the cell inner membrane. F(1)F(0) ATP synthase produces ATP from ADP in the presence of a proton or sodium gradient. F-type ATPases consist of two structural domains, F(1) containing the extramembraneous catalytic core and F(0) containing the membrane proton channel, linked together by a central stalk and a peripheral stalk. During catalysis, ATP synthesis in the catalytic domain of F(1) is coupled via a rotary mechanism of the central stalk subunits to proton translocation. Its function is as follows. This protein is part of the stalk that links CF(0) to CF(1). It either transmits conformational changes from CF(0) to CF(1) or is implicated in proton conduction. This chain is ATP synthase subunit delta, found in Anaeromyxobacter sp. (strain Fw109-5).